Here is a 216-residue protein sequence, read N- to C-terminus: Ras-related protein RABA1b (216 aa).

20-27 (GDSGVGKS) is a GTP binding site. Positions 42–50 (SKSTIGVEF) match the Effector region motif. Residues 68–72 (DTAGQ), 126–129 (NKSD), and 156–157 (SA) each bind GTP. S-geranylgeranyl cysteine attachment occurs at residues cysteine 213 and cysteine 214.

Belongs to the small GTPase superfamily. Rab family.

Its subcellular location is the cell membrane. In terms of biological role, intracellular vesicle trafficking and protein transport. The polypeptide is Ras-related protein RABA1b (RABA1B) (Arabidopsis thaliana (Mouse-ear cress)).